The sequence spans 188 residues: ATP synthase subunit b (188 aa).

Residues 19–39 traverse the membrane as a helical segment; that stretch reads LPAVYDIVWSAVVFVVLLVVI.

This sequence belongs to the ATPase B chain family. In terms of assembly, F-type ATPases have 2 components, F(1) - the catalytic core - and F(0) - the membrane proton channel. F(1) has five subunits: alpha(3), beta(3), gamma(1), delta(1), epsilon(1). F(0) has three main subunits: a(1), b(2) and c(10-14). The alpha and beta chains form an alternating ring which encloses part of the gamma chain. F(1) is attached to F(0) by a central stalk formed by the gamma and epsilon chains, while a peripheral stalk is formed by the delta and b chains.

The protein resides in the cell membrane. F(1)F(0) ATP synthase produces ATP from ADP in the presence of a proton or sodium gradient. F-type ATPases consist of two structural domains, F(1) containing the extramembraneous catalytic core and F(0) containing the membrane proton channel, linked together by a central stalk and a peripheral stalk. During catalysis, ATP synthesis in the catalytic domain of F(1) is coupled via a rotary mechanism of the central stalk subunits to proton translocation. Its function is as follows. Component of the F(0) channel, it forms part of the peripheral stalk, linking F(1) to F(0). The protein is ATP synthase subunit b of Clavibacter michiganensis subsp. michiganensis (strain NCPPB 382).